Here is an 82-residue protein sequence, read N- to C-terminus: Large ribosomal subunit protein uL23 (82 aa).

It belongs to the universal ribosomal protein uL23 family. Part of the 50S ribosomal subunit. Contacts protein L29.

In terms of biological role, binds to 23S rRNA. One of the proteins that surrounds the polypeptide exit tunnel on the outside of the ribosome. The protein is Large ribosomal subunit protein uL23 of Sulfurisphaera tokodaii (strain DSM 16993 / JCM 10545 / NBRC 100140 / 7) (Sulfolobus tokodaii).